Consider the following 291-residue polypeptide: Probable ABC transporter permease protein PH1038 (291 aa).

8 helical membrane-spanning segments follow: residues 7–27 (PFFFLLPALTLMVPFVIYPVF), 75–95 (IVWIAIHLPTTIFLGLGFALL), 106–126 (IIKSIIFLGMVIPMVVGGLII), 133–153 (GAGVIPAFFKLIGIEKLAITW), 160–180 (ALFSVILGSIWIWTGFSMLMY), 208–228 (FVIWPLLRPITVVIVAMTLLW), 232–252 (IFDIVYVATGGGPGGASMVLA), and 267–287 (YAAVVAVLLTALTFIPALWLI). Residues 71–286 (LIHNIVWIAI…ALTFIPALWL (216 aa)) enclose the ABC transmembrane type-1 domain.

The protein belongs to the binding-protein-dependent transport system permease family. MalFG subfamily.

It is found in the cell membrane. In terms of biological role, probably part of a binding-protein-dependent transport system PH1036/38/39. Probably responsible for the translocation of the substrate across the membrane. The sequence is that of Probable ABC transporter permease protein PH1038 from Pyrococcus horikoshii (strain ATCC 700860 / DSM 12428 / JCM 9974 / NBRC 100139 / OT-3).